Here is a 127-residue protein sequence, read N- to C-terminus: Large ribosomal subunit protein eL32B (127 aa).

This sequence belongs to the eukaryotic ribosomal protein eL32 family. In terms of assembly, component of the large ribosomal subunit (LSU). Mature yeast ribosomes consist of a small (40S) and a large (60S) subunit. The 40S small subunit contains 1 molecule of ribosomal RNA (18S rRNA) and at least 33 different proteins. The large 60S subunit contains 3 rRNA molecules (25S, 5.8S and 5S rRNA) and at least 46 different proteins.

It localises to the cytoplasm. It is found in the nucleus. The protein localises to the nucleolus. Functionally, component of the ribosome, a large ribonucleoprotein complex responsible for the synthesis of proteins in the cell. The small ribosomal subunit (SSU) binds messenger RNAs (mRNAs) and translates the encoded message by selecting cognate aminoacyl-transfer RNA (tRNA) molecules. The large subunit (LSU) contains the ribosomal catalytic site termed the peptidyl transferase center (PTC), which catalyzes the formation of peptide bonds, thereby polymerizing the amino acids delivered by tRNAs into a polypeptide chain. The nascent polypeptides leave the ribosome through a tunnel in the LSU and interact with protein factors that function in enzymatic processing, targeting, and the membrane insertion of nascent chains at the exit of the ribosomal tunnel. This Schizosaccharomyces pombe (strain 972 / ATCC 24843) (Fission yeast) protein is Large ribosomal subunit protein eL32B (rpl3201).